Consider the following 135-residue polypeptide: Rheacalcin-1 (135 aa).

3 cysteine pairs are disulfide-bonded: C6/C17, C34/C131, and C106/C123. Positions 13–132 constitute a C-type lectin domain; that stretch reads FRGNCYGYFR…CSERNAFICK (120 aa).

It localises to the secreted. The protein localises to the extracellular space. Its subcellular location is the extracellular matrix. The sequence is that of Rheacalcin-1 from Rhea americana (Greater rhea).